The chain runs to 368 residues: Protein tesmin/TSO1-like CXC 8 (368 aa).

A CRC domain is found at 64–185; the sequence is KHKGCRCKQS…KCINCKNVSE (122 aa).

The protein belongs to the lin-54 family.

It localises to the nucleus. Its function is as follows. Plays a role in development of both male and female reproductive tissues. This Arabidopsis thaliana (Mouse-ear cress) protein is Protein tesmin/TSO1-like CXC 8 (TCX8).